The following is a 910-amino-acid chain: Protein translocase subunit SecA (910 aa).

ATP-binding positions include Q87, 105–109, and D501; that span reads GEGKT. Residues C894, C896, C905, and H906 each coordinate Zn(2+).

Belongs to the SecA family. In terms of assembly, monomer and homodimer. Part of the essential Sec protein translocation apparatus which comprises SecA, SecYEG and auxiliary proteins SecDF-YajC and YidC. Zn(2+) is required as a cofactor.

It localises to the cell inner membrane. Its subcellular location is the cytoplasm. The catalysed reaction is ATP + H2O + cellular proteinSide 1 = ADP + phosphate + cellular proteinSide 2.. Part of the Sec protein translocase complex. Interacts with the SecYEG preprotein conducting channel. Has a central role in coupling the hydrolysis of ATP to the transfer of proteins into and across the cell membrane, serving both as a receptor for the preprotein-SecB complex and as an ATP-driven molecular motor driving the stepwise translocation of polypeptide chains across the membrane. This is Protein translocase subunit SecA from Acidiphilium cryptum (strain JF-5).